The primary structure comprises 437 residues: MARVAWGLLWLLLGSAGAQYEKYSFRGFPPEDLMPLAAAYGHALEQYEGESWRESARYLEAALRLHRLLRDSEAFCHANCSGPAPAAKPDPDGGRADEWACELRLFGRVLERAACLRRCKRTLPAFQVPYPPRQLLRDFQSRLPYQYLHYALFKANRLEKAVAAAYTFLQRNPKHELTAKYLNYYQGMLDVADESLTDLEAQPYEAVFLRAVKLYNSGDFRSSTEDMERALSEYLAVFARCLAGCEGAHEQVDFKDFYPAIADLFAESLQCKVDCEANLTPNVGGYFVDKFVATMYHYLQFAYYKLNDVRQAARSAASYMLFDPKDSVMQQNLVYYRFHRARWGLEEEDFQPREEAMLYHNQTAELRELLEFTHMYLQSDDEMELEETEPPLEPEDALSDAEFEGEGDYEEGMYADWWQEPDAKGDEAEAEPEPELA.

An N-terminal signal peptide occupies residues 1–18 (MARVAWGLLWLLLGSAGA). N-linked (GlcNAc...) asparagine glycosylation is present at Asn361. Composition is skewed to acidic residues over residues 381 to 413 (DEME…EEGM) and 428 to 437 (AEAEPEPELA). The interval 381-437 (DEMELEETEPPLEPEDALSDAEFEGEGDYEEGMYADWWQEPDAKGDEAEAEPEPELA) is disordered.

It belongs to the leprecan family. In terms of assembly, interacts with PLOD1, P3H3 and PPIB. Identified in a complex with PLOD1 and P3H3. Detected in fibroblasts (at protein level). Detected in spleen, prostate, testis, ovary, colon, pancreas, kidney, placenta and heart.

Its subcellular location is the endoplasmic reticulum. Functionally, part of a complex composed of PLOD1, P3H3 and P3H4 that catalyzes hydroxylation of lysine residues in collagen alpha chains and is required for normal assembly and cross-linking of collagen fibrils. Required for normal bone density and normal skin stability via its role in hydroxylation of lysine residues in collagen alpha chains and in collagen fibril assembly. In Homo sapiens (Human), this protein is Endoplasmic reticulum protein SC65.